Consider the following 656-residue polypeptide: Spermatogenesis-associated protein 13 (656 aa).

The span at 1-12 shows a compositional bias: polar residues; it reads MHPASVTTTSQD. The disordered stretch occupies residues 1 to 26; the sequence is MHPASVTTTSQDPCAPSGSCRGGRRR. S82 carries the phosphoserine modification. The tract at residues 85–115 is disordered; sequence IGLDRVGRRRQMKTSNVSSDGGAESSALVDD. The interval 102–154 is ABR (APC-binding region) domain; it reads SSDGGAESSALVDDNGSEEDFSYEELCQANPRYLQPGGEQLAINELISDGSVV. S118 carries the phosphoserine modification. One can recognise an SH3 domain in the interval 151 to 210; sequence GSVVCAEALWDHVTMDDQELGFKAGDVIQVLEASNKDWWWGRNEDKEAWFPASFVRLRVN. The segment at 215–242 is disordered; it reads PENCSSSHGEEQDEDTSKARHKHPESQQ. Residues 244 to 428 enclose the DH domain; it reads MRTNVIQEIM…KNVACLINER (185 aa). A PH domain is found at 459–565; that stretch reads ELIHSGELTK…WLQAYADERR (107 aa). Residues 565–656 form a C-terminal tail region; it reads RRVQEDQQMG…TFHKLTPFRK (92 aa).

As to quaternary structure, interacts (via ABR and SH3 domain) with APC. The binding of APC enhances its GEF activity by relieving it from an autoinhibitory conformation, in which the ABR and SH3 domains are associated with the C-terminal tail. Interacts (via C-terminal tail) with PPP1R9B (via C-terminus). Interacts with RAC1. As to expression, expression is aberrantly enhanced in most colorectal tumors.

It localises to the cytoplasm. The protein localises to the cell projection. Its subcellular location is the filopodium. It is found in the lamellipodium. The protein resides in the ruffle membrane. It localises to the podosome. With respect to regulation, both the ABR and the SH3 domains contribute to maintaining the protein in an inhibited conformation by associating with the C-terminal tail. Binding of these domains to the C-terminal tail inhibits the activity of the protein by blocking a region that is required for its GEF activity. Acts as a guanine nucleotide exchange factor (GEF) for RHOA, RAC1 and CDC42 GTPases. Regulates cell migration and adhesion assembly and disassembly through a RAC1, PI3K, RHOA and AKT1-dependent mechanism. Increases both RAC1 and CDC42 activity, but decreases the amount of active RHOA. Required for MMP9 up-regulation via the JNK signaling pathway in colorectal tumor cells. Involved in tumor angiogenesis and may play a role in intestinal adenoma formation and tumor progression. The sequence is that of Spermatogenesis-associated protein 13 (Spata13) from Mus musculus (Mouse).